A 55-amino-acid polypeptide reads, in one-letter code: Large ribosomal subunit protein bL33 (55 aa).

The protein belongs to the bacterial ribosomal protein bL33 family.

In Hamiltonella defensa subsp. Acyrthosiphon pisum (strain 5AT), this protein is Large ribosomal subunit protein bL33.